A 328-amino-acid polypeptide reads, in one-letter code: Isopenicillin N synthase (328 aa).

Isopenicillin N is bound by residues R85, Y89, S181, and Y187. N-[(5S)-5-amino-5-carboxypentanoyl]-L-cysteinyl-D-valine is bound by residues R85, Y89, S181, Y187, H210, and D212. The Fe2OG dioxygenase domain occupies 178–284 (TLSSVSLIRY…RLSLPFFFHA (107 aa)). 3 residues coordinate Fe(2+): H210, D212, and H266. R275 is a binding site for 2-oxoglutarate. An isopenicillin N-binding site is contributed by S277. S277 contacts N-[(5S)-5-amino-5-carboxypentanoyl]-L-cysteinyl-D-valine.

Belongs to the iron/ascorbate-dependent oxidoreductase family. Fe cation is required as a cofactor. L-ascorbate serves as cofactor.

It catalyses the reaction N-[(5S)-5-amino-5-carboxypentanoyl]-L-cysteinyl-D-valine + O2 = isopenicillin N + 2 H2O. Its pathway is antibiotic biosynthesis; penicillin G biosynthesis; penicillin G from L-alpha-aminoadipate and L-cysteine and L-valine: step 2/3. Its function is as follows. Removes, in the presence of oxygen, 4 hydrogen atoms from delta-L-(alpha-aminoadipyl)-L-cysteinyl-D-valine (ACV) to form the azetidinone and thiazolidine rings of isopenicillin. In Amycolatopsis lactamdurans (Nocardia lactamdurans), this protein is Isopenicillin N synthase (pcbC).